Here is a 90-residue protein sequence, read N- to C-terminus: Chaplin-G (90 aa).

The N-terminal stretch at 1-27 (MSRIAKAAGVALGTGAVVLSGTGMAMA) is a signal peptide. One can recognise a Chaplin domain in the interval 38–78 (SPGVLSGNVVQVPVHVPVNLCGNTIDVIGLLNPAFGNACEN). Residues C58 and C76 are joined by a disulfide bond.

Belongs to the chaplin family. Short chaplin subfamily.

It is found in the cell surface. The protein resides in the secreted. It localises to the cell wall. In terms of biological role, one of 8 partially redundant surface-active proteins required for efficient formation of aerial mycelium; the short chaplins assemble into a hydrophobic, amyloidal fibrillar surface layer that envelopes and protects aerial hyphae and spores, presumably anchored to the long chaplins. Chaplins have an overlapping function with the surface-active SapB peptide; chaplins are essential on minimal medium while on rich medium both chaplins and SapB are required for efficient aerial hyphae formation. Chaplins are also involved in cell attachment to a hydrophobic surface. Forms amyloid fibrils in vitro probably composed of stacked beta-sheets, at low extracellular concentrations individually restores the ability to form aerial hyphae to a chaplin-deficient strain. A small chaplin extract (ChpD, ChpE, ChpF, ChpG and ChpH) self-assembles into 2 different amyloids; small fibrils at the air-water interface form an amphipathic membrane that resembles spore-surface structures involved in aerial hyphae formation, and hydrophilic fibrils in solution that resemble the fibers that attach cells to a hydrophobic surface. At the air-water interface the hydrophilic surface is in contact with water (probably equivalent to the peptidoglycan layer), while the hydrophobic face is exposed to the air, making the surface of the aerial hyphae hydrophobic. A small chaplin extract applied to a chaplin-deficient strain restores aerial hyphae formation. The small chaplin extract forms an amyloid-like structure similar to that seen on the surface of cells without rodlets (rdlA-rdlB deletions), and is highly surface active, reducing surface tension from 72 to 26 mJ/m(2), which probably allows escape of hyphae from an aqueous environment into air. ChpF and ChpG are sufficient to restore the rodlet layer and hydrophobicity to a strain deleted for the other 6 chaplin genes. The chain is Chaplin-G from Streptomyces coelicolor (strain ATCC BAA-471 / A3(2) / M145).